Reading from the N-terminus, the 403-residue chain is Ribosomal RNA large subunit methyltransferase I (403 aa).

Positions 9–88 (YPRLVLSKGR…ESIDIAFFTR (80 aa)) constitute a PUA domain.

It belongs to the methyltransferase superfamily. RlmI family.

It localises to the cytoplasm. It carries out the reaction cytidine(1962) in 23S rRNA + S-adenosyl-L-methionine = 5-methylcytidine(1962) in 23S rRNA + S-adenosyl-L-homocysteine + H(+). Functionally, specifically methylates the cytosine at position 1962 (m5C1962) of 23S rRNA. This Salmonella newport (strain SL254) protein is Ribosomal RNA large subunit methyltransferase I.